Here is a 405-residue protein sequence, read N- to C-terminus: L-carnitine CoA-transferase (405 aa).

CoA contacts are provided by Lys-97 and Arg-104. The active-site Nucleophile is Asp-169.

It belongs to the CoA-transferase III family. CaiB subfamily. As to quaternary structure, homodimer.

It is found in the cytoplasm. It catalyses the reaction crotonobetainyl-CoA + (R)-carnitine = crotonobetaine + (R)-carnitinyl-CoA. The catalysed reaction is 4-(trimethylamino)butanoyl-CoA + (R)-carnitine = (R)-carnitinyl-CoA + 4-(trimethylamino)butanoate. The protein operates within amine and polyamine metabolism; carnitine metabolism. In terms of biological role, catalyzes the reversible transfer of the CoA moiety from gamma-butyrobetainyl-CoA to L-carnitine to generate L-carnitinyl-CoA and gamma-butyrobetaine. Is also able to catalyze the reversible transfer of the CoA moiety from gamma-butyrobetainyl-CoA or L-carnitinyl-CoA to crotonobetaine to generate crotonobetainyl-CoA. This chain is L-carnitine CoA-transferase, found in Escherichia coli (strain K12 / MC4100 / BW2952).